We begin with the raw amino-acid sequence, 158 residues long: NAD(P)H-quinone oxidoreductase subunit J, chloroplastic (158 aa).

This sequence belongs to the complex I 30 kDa subunit family. NDH is composed of at least 16 different subunits, 5 of which are encoded in the nucleus.

It is found in the plastid. Its subcellular location is the chloroplast thylakoid membrane. It catalyses the reaction a plastoquinone + NADH + (n+1) H(+)(in) = a plastoquinol + NAD(+) + n H(+)(out). The catalysed reaction is a plastoquinone + NADPH + (n+1) H(+)(in) = a plastoquinol + NADP(+) + n H(+)(out). In terms of biological role, NDH shuttles electrons from NAD(P)H:plastoquinone, via FMN and iron-sulfur (Fe-S) centers, to quinones in the photosynthetic chain and possibly in a chloroplast respiratory chain. The immediate electron acceptor for the enzyme in this species is believed to be plastoquinone. Couples the redox reaction to proton translocation, and thus conserves the redox energy in a proton gradient. This Solanum tuberosum (Potato) protein is NAD(P)H-quinone oxidoreductase subunit J, chloroplastic.